Consider the following 235-residue polypeptide: Bypass of stop codon protein 2 (235 aa).

Residues 68 to 88 form a helical membrane-spanning segment; that stretch reads FGIFQLMCSLGVIVLLLPIII. Position 177 is a phosphoserine (S177).

It localises to the lipid droplet. It is found in the membrane. The sequence is that of Bypass of stop codon protein 2 (BSC2) from Saccharomyces cerevisiae (strain ATCC 204508 / S288c) (Baker's yeast).